Consider the following 976-residue polypeptide: Chitin synthase 3A (976 aa).

The tract at residues D29–L72 is disordered. The segment covering A31–S40 has biased composition (polar residues). N-linked (GlcNAc...) asparagine glycans are attached at residues N32, N66, N95, and N602. 7 helical membrane passes run L639–I659, I684–A704, V717–L737, L773–L793, S801–F821, T903–D923, and F944–I964.

Belongs to the chitin synthase family. Class III subfamily.

It is found in the cell membrane. It carries out the reaction [(1-&gt;4)-N-acetyl-beta-D-glucosaminyl](n) + UDP-N-acetyl-alpha-D-glucosamine = [(1-&gt;4)-N-acetyl-beta-D-glucosaminyl](n+1) + UDP + H(+). Functionally, polymerizes chitin, a structural polymer of the cell wall and septum, by transferring the sugar moiety of UDP-GlcNAc to the non-reducing end of the growing chitin polymer. Shows additive effects in septum formation with CHS1, CHS2, CHS4, CHS5, CHS6 and CHS7. Involved in virulence and mediates mycotoxin deoxinivalenol (DON) biosynthesis via the regulation of the expression of TRI4, TRI5 and TRI6. The polypeptide is Chitin synthase 3A (Gibberella zeae (strain ATCC MYA-4620 / CBS 123657 / FGSC 9075 / NRRL 31084 / PH-1) (Wheat head blight fungus)).